Here is a 285-residue protein sequence, read N- to C-terminus: Probable endonuclease 4 (285 aa).

Residues His-69, His-109, Glu-145, Asp-179, His-182, His-216, Asp-229, His-231, and Glu-261 each contribute to the Zn(2+) site.

This sequence belongs to the AP endonuclease 2 family. Zn(2+) serves as cofactor.

The catalysed reaction is Endonucleolytic cleavage to 5'-phosphooligonucleotide end-products.. Functionally, endonuclease IV plays a role in DNA repair. It cleaves phosphodiester bonds at apurinic or apyrimidinic (AP) sites, generating a 3'-hydroxyl group and a 5'-terminal sugar phosphate. This chain is Probable endonuclease 4, found in Salmonella arizonae (strain ATCC BAA-731 / CDC346-86 / RSK2980).